Here is a 249-residue protein sequence, read N- to C-terminus: Long form salivary protein D7L (249 aa).

The first 19 residues, 1–19 (MNAVITSLVFISLVGVGYS), serve as a signal peptide directing secretion. Intrachain disulfides connect cysteine 36/cysteine 66 and cysteine 62/cysteine 112. Tryptophan 49 is a thromboxane A2 binding site. Tryptophan 52 is a binding site for leukotriene C4. Tyrosine 63 is a binding site for thromboxane A2. Leukotriene C4-binding residues include glycine 136 and lysine 154. Lysine 154 provides a ligand contact to thromboxane A2. 3 cysteine pairs are disulfide-bonded: cysteine 162/cysteine 178, cysteine 174/cysteine 221, and cysteine 211/cysteine 230.

It belongs to the PBP/GOBP family.

Its subcellular location is the secreted. Its function is as follows. Modulates blood feeding of female sandflies on vertebrate species by binding and sequestering different mediators involved in the host response. Binds leukotriene C4, leukotriene D4, leukotriene E4 and U-46619, a stable analog of thromboxane A2. Does not bind histamine or serotonin. Inhibits platelet aggregation induced by low concentrations of collagen in thromboxane A2-dependent manner. This is Long form salivary protein D7L from Phlebotomus duboscqi (Sandfly).